The chain runs to 389 residues: Migration and invasion-inhibitory protein (389 aa).

The span at 44-54 (LDYSSSSNNLE) shows a compositional bias: low complexity. Disordered stretches follow at residues 44-80 (LDYS…WDPL) and 131-150 (KRPV…AQVP). A compositionally biased stretch (polar residues) spans 58–70 (SQETSASSVAPNS). Basic and acidic residues predominate over residues 71 to 80 (QDKRHVWDPL). Ser309 is subject to Phosphoserine.

As to quaternary structure, interacts with IGFBP2.

Its function is as follows. Inhibits glioma cells invasion and down-regulates adhesion- and motility-associated genes such as NFKB2 and ICAM1. Exhibits opposing effects to IGFBP2 on cell invasion. This chain is Migration and invasion-inhibitory protein (Miip), found in Rattus norvegicus (Rat).